Here is a 534-residue protein sequence, read N- to C-terminus: NAD(P)H-quinone oxidoreductase chain 4 1 (534 aa).

14 helical membrane-spanning segments follow: residues 6–26 (IPWL…IPLI), 34–54 (IRWY…TAFW), 87–107 (LSMP…LAAW), 113–133 (PKLF…VFAV), 136–156 (LLLF…LISI), 169–189 (FILY…ALAF), 209–229 (ALEL…LPIF), 243–263 (SAPV…YGLI), 277–297 (FAPL…LTAF), 311–331 (ISHM…GMNG), 332–352 (AVLQ…LSGV), 376–396 (FAMF…SGFV), 418–438 (IAIF…LSML), and 464–484 (IFVA…PKLA).

It belongs to the complex I subunit 4 family.

Its subcellular location is the cellular thylakoid membrane. The enzyme catalyses a plastoquinone + NADH + (n+1) H(+)(in) = a plastoquinol + NAD(+) + n H(+)(out). It carries out the reaction a plastoquinone + NADPH + (n+1) H(+)(in) = a plastoquinol + NADP(+) + n H(+)(out). In terms of biological role, NDH-1 shuttles electrons from NAD(P)H, via FMN and iron-sulfur (Fe-S) centers, to quinones in the respiratory chain. The immediate electron acceptor for the enzyme in this species is believed to be plastoquinone. Couples the redox reaction to proton translocation (for every two electrons transferred, four hydrogen ions are translocated across the cytoplasmic membrane), and thus conserves the redox energy in a proton gradient. This chain is NAD(P)H-quinone oxidoreductase chain 4 1, found in Picosynechococcus sp. (strain ATCC 27264 / PCC 7002 / PR-6) (Agmenellum quadruplicatum).